A 443-amino-acid chain; its full sequence is Glutamate-1-semialdehyde 2,1-aminomutase (443 aa).

N6-(pyridoxal phosphate)lysine is present on lysine 272.

This sequence belongs to the class-III pyridoxal-phosphate-dependent aminotransferase family. HemL subfamily. Homodimer. Requires pyridoxal 5'-phosphate as cofactor.

The protein resides in the cytoplasm. The catalysed reaction is (S)-4-amino-5-oxopentanoate = 5-aminolevulinate. It functions in the pathway porphyrin-containing compound metabolism; protoporphyrin-IX biosynthesis; 5-aminolevulinate from L-glutamyl-tRNA(Glu): step 2/2. It participates in porphyrin-containing compound metabolism; chlorophyll biosynthesis. The protein is Glutamate-1-semialdehyde 2,1-aminomutase of Chloroflexus aurantiacus (strain ATCC 29366 / DSM 635 / J-10-fl).